A 389-amino-acid chain; its full sequence is Flavin-dependent monooxygenase (389 aa).

FAD is bound by residues alanine 12 to alanine 15, glutamate 34 to lysine 35, glutamine 44, arginine 105, tyrosine 267, and aspartate 289.

This sequence belongs to the aromatic-ring hydroxylase family. FAD serves as cofactor.

It carries out the reaction a tetracycline + NADPH + O2 + H(+) = a (1S,10aS)-3-(CONH2)-1-(Me2N)-3,3a,4,6-(HO)4-2,5-dioxo-1H,10aH,11H,11aH-cyclopenta[b]anthracene + CO + NADP(+) + H2O. It catalyses the reaction 7-chlorotetracycline + NADPH + O2 + H(+) = (1S,10S,10aS)-3-(CONH2)-9-Cl-1-(Me2N)-3,3a,4,10-(HO)4-10-Me-2,5-dioxo-1H,10aH,11H,11aH-cyclopenta[b]anthracen-6-olate + CO + NADP(+) + H2O. Inhibited by anhydrotetracycline. Functionally, an FAD-requiring monooxygenase active on tetracycline antibiotic and some of its derivatives, which leads to their inactivation. Expression in E.coli confers high resistance to tetracycline and oxytetracycline, does not confer resistance to minocycline or tigecycline. The reaction requires NADPH. Expression in L.pneumophila confers resistance to tetracycline. Degrades and confers resistance to tetracycline and chlortetracycline. The sequence is that of Flavin-dependent monooxygenase (tet(56)) from Legionella longbeachae serogroup 1 (strain NSW150).